A 475-amino-acid chain; its full sequence is Ribulose bisphosphate carboxylase large chain (475 aa).

A propeptide spanning residues 1–2 (MS) is cleaved from the precursor. N-acetylproline is present on P3. Position 14 is an N6,N6,N6-trimethyllysine (K14). N123 and T173 together coordinate substrate. K175 (proton acceptor) is an active-site residue. K177 is a substrate binding site. Mg(2+)-binding residues include K201, D203, and E204. Residue K201 is modified to N6-carboxylysine. The Proton acceptor role is filled by H294. Positions 295, 327, and 379 each coordinate substrate.

It belongs to the RuBisCO large chain family. Type I subfamily. As to quaternary structure, heterohexadecamer of 8 large chains and 8 small chains; disulfide-linked. The disulfide link is formed within the large subunit homodimers. The cofactor is Mg(2+). The disulfide bond which can form in the large chain dimeric partners within the hexadecamer appears to be associated with oxidative stress and protein turnover.

Its subcellular location is the plastid. The protein resides in the chloroplast. The catalysed reaction is 2 (2R)-3-phosphoglycerate + 2 H(+) = D-ribulose 1,5-bisphosphate + CO2 + H2O. The enzyme catalyses D-ribulose 1,5-bisphosphate + O2 = 2-phosphoglycolate + (2R)-3-phosphoglycerate + 2 H(+). RuBisCO catalyzes two reactions: the carboxylation of D-ribulose 1,5-bisphosphate, the primary event in carbon dioxide fixation, as well as the oxidative fragmentation of the pentose substrate in the photorespiration process. Both reactions occur simultaneously and in competition at the same active site. This chain is Ribulose bisphosphate carboxylase large chain, found in Staurastrum punctulatum (Green alga).